The chain runs to 469 residues: GTPase Der (469 aa).

2 EngA-type G domains span residues 3–167 and 176–349; these read PTLV…PEEE and PKIA…AAAF. GTP contacts are provided by residues 9–16, 56–60, 119–122, 182–189, 229–233, and 294–297; these read GRPNVGKS, DTGGL, NKAE, DTAGV, and NKWD. Residues 350–436 enclose the KH-like domain; the sequence is IKLSTPKLTR…RIQIKEDEGK (87 aa). A compositionally biased stretch (basic and acidic residues) spans 432-443; it reads EDEGKNPFEGKK. Residues 432 to 469 form a disordered region; it reads EDEGKNPFEGKKRAPLSESEATRMRRKKRVRRKVYGAD. Positions 455-469 are enriched in basic residues; sequence MRRKKRVRRKVYGAD.

The protein belongs to the TRAFAC class TrmE-Era-EngA-EngB-Septin-like GTPase superfamily. EngA (Der) GTPase family. Associates with the 50S ribosomal subunit.

Functionally, GTPase that plays an essential role in the late steps of ribosome biogenesis. This is GTPase Der from Thiobacillus denitrificans (strain ATCC 25259 / T1).